Consider the following 173-residue polypeptide: 16S rRNA aminocarboxypropyltransferase (173 aa).

S-adenosyl-L-methionine-binding residues include T25, L72, L96, and S115.

The protein belongs to the TDD superfamily. TSR3 family.

The protein resides in the cytoplasm. It carries out the reaction an N(1)-methylpseudouridine in rRNA + S-adenosyl-L-methionine = N(1)-methyl-N(3)-[(3S)-3-amino-3-carboxypropyl]pseudouridine in rRNA + S-methyl-5'-thioadenosine + H(+). Aminocarboxypropyltransferase that catalyzes the aminocarboxypropyl transfer on pseudouridine corresponding to position 914 in M.jannaschii 16S rRNA. It constitutes the last step in biosynthesis of the hypermodified N1-methyl-N3-(3-amino-3-carboxypropyl) pseudouridine (m1acp3-Psi). In Methanosarcina mazei (strain ATCC BAA-159 / DSM 3647 / Goe1 / Go1 / JCM 11833 / OCM 88) (Methanosarcina frisia), this protein is 16S rRNA aminocarboxypropyltransferase.